The chain runs to 332 residues: Fructose-1,6-bisphosphatase class 1 (332 aa).

Mg(2+)-binding residues include E89, D110, L112, and D113. Substrate contacts are provided by residues 113–116 (DGSS), N206, Y239, 257–259 (YLY), and K269. A Mg(2+)-binding site is contributed by E275.

The protein belongs to the FBPase class 1 family. As to quaternary structure, homotetramer. Requires Mg(2+) as cofactor.

The protein localises to the cytoplasm. It carries out the reaction beta-D-fructose 1,6-bisphosphate + H2O = beta-D-fructose 6-phosphate + phosphate. It functions in the pathway carbohydrate biosynthesis; gluconeogenesis. The chain is Fructose-1,6-bisphosphatase class 1 from Klebsiella pneumoniae subsp. pneumoniae (strain ATCC 700721 / MGH 78578).